The sequence spans 628 residues: Phosphomethylpyrimidine synthase (628 aa).

The interval 1–22 (MSKQEKTINLSESAQVDQQSVQ) is disordered. Positions 7–22 (TINLSESAQVDQQSVQ) are enriched in polar residues. Substrate is bound by residues Asn232, Met261, Tyr290, His326, 346 to 348 (SRG), 387 to 390 (DGLR), and Glu426. His430 is a Zn(2+) binding site. Tyr453 contacts substrate. Zn(2+) is bound at residue His494. The [4Fe-4S] cluster site is built by Cys574, Cys577, and Cys582.

This sequence belongs to the ThiC family. In terms of assembly, homodimer. It depends on [4Fe-4S] cluster as a cofactor.

It carries out the reaction 5-amino-1-(5-phospho-beta-D-ribosyl)imidazole + S-adenosyl-L-methionine = 4-amino-2-methyl-5-(phosphooxymethyl)pyrimidine + CO + 5'-deoxyadenosine + formate + L-methionine + 3 H(+). Its pathway is cofactor biosynthesis; thiamine diphosphate biosynthesis. Catalyzes the synthesis of the hydroxymethylpyrimidine phosphate (HMP-P) moiety of thiamine from aminoimidazole ribotide (AIR) in a radical S-adenosyl-L-methionine (SAM)-dependent reaction. This chain is Phosphomethylpyrimidine synthase, found in Pseudomonas putida (strain W619).